The sequence spans 277 residues: Large ribosomal subunit protein uL2 (277 aa).

A disordered region spans residues 222–277 (GVAMNPVDHPHGGGEGRTSGGRHPVSPWGKPTKGKRTRSNKATDKFIMRTRHQRKK).

This sequence belongs to the universal ribosomal protein uL2 family. Part of the 50S ribosomal subunit. Forms a bridge to the 30S subunit in the 70S ribosome.

Functionally, one of the primary rRNA binding proteins. Required for association of the 30S and 50S subunits to form the 70S ribosome, for tRNA binding and peptide bond formation. It has been suggested to have peptidyltransferase activity; this is somewhat controversial. Makes several contacts with the 16S rRNA in the 70S ribosome. This is Large ribosomal subunit protein uL2 from Bartonella henselae (strain ATCC 49882 / DSM 28221 / CCUG 30454 / Houston 1) (Rochalimaea henselae).